A 970-amino-acid chain; its full sequence is MDDDQQFCLRWNNHQSTLISVFDTLLENETLVDCTLAAEGKFLKAHKVVLSACSPYFATLLQEQYDKHPIFILKDVKYQELRAMMDYMYRGEVNISQDQLAALLKAAESLQIKGLSDNRTGGGVAPKPESSGHHRGGKLSGAYTLEQTKRARLATGGAMDTSGDVSGSREGSSSPSRRRRKVRRRSMENDAHDNSNSSVLQAAASNQSILQQTGAGLAVSALVTTQLSSGPAAGTSSQASSTQQQQPLTSTNVTKKTESAKLTSSTAAPASGASASAAVQQAHLHQQQAQTTSDAINTENVQAQSQGGAQGVQGDDEDIDEGSAVGGPNSATGPNPASASASAVHAGVVVKQLASVVDKSSSNHKHKIKDNSVSSVGSEMVIEPKAEYDDDAHDENVEDLTLDEEDMTMEELDQTAGTSQGGEGSSQTYATWQHDRSQDELGLMAQDAQQRDPQASKQDKGEQTEGAQDEFELDDCLLESNDIVITQNKDGFVLHVKKLGNITAAKLEENQAVAQQQGQAAVTVTGPAGQPTPTITELLNAAAASHSEPKPTLTTLTSTPIKLPSSECELINIKKIIPATTTIATHHPHTSSTIIHPHHIIQHVSQEPHHQEHHQQHQTIHIEEVPQTSQQHHQQQHHHQLQTVQPTHTQVQSIITAHPGQTINLVGLRNVQLADSKPIASRIRYSRGKIIGPTVQNLQIVETHEPIQHQHHELSDGTKYEISEIDLNNPNASAAIISDLVKYAEIDDIELPDGTKIGIGFAPSEITEHMQTSGGETHITTIEHEPQELQTVHQHEQTQQTHHIHAGQLQTHHIQTVVQSSSGQQQHDQQQHHQHHSIELQDDDGVETITPEELGMHDSSKSYTILTTRPMKEESEHDPSGMTYELSLSDSSLGPCDDPESRYVCRHCGKKYRWKSTLRRHENVECGGKEPCHPCPYCSYKAKQRGNLGVHVRKHHPEKPQLESKRGRKV.

Residues 32–97 (VDCTLAAEGK…MYRGEVNISQ (66 aa)) enclose the BTB domain. Disordered regions lie at residues 115–200 (LSDN…SSVL), 228–340 (SSGP…ASAS), 447–468 (DAQQ…EGAQ), and 790–843 (QTVH…LQDD). 4 stretches are compositionally biased toward low complexity: residues 162 to 175 (SGDV…SSSP), 228 to 251 (SSGP…LTST), 263 to 293 (TSST…QTTS), and 329 to 340 (NSATGPNPASAS). Composition is skewed to polar residues over residues 447–456 (DAQQRDPQAS) and 808–818 (QLQTHHIQTVV). Residues 819-828 (QSSSGQQQHD) show a composition bias toward low complexity. A C2H2-type 1; degenerate zinc finger spans residues 903–925 (YVCRHCGKKYRWKSTLRRHENVE). A C2H2-type 2 zinc finger spans residues 933–955 (HPCPYCSYKAKQRGNLGVHVRKH).

As to expression, by stage 11, isoform F is expressed throughout the mesoderm whereas isoform T, and at low levels isoform I, is expressed throughout the ectoderm. Isoform K is expressed in both mesoderm and ectoderm. Expression becomes restricted during later stages; starting from stage 14 to 15, isoform F is expressed in the gut. Isoform I is expressed in the CNS. Isoform I and isoform F show expression in the epithelium starting at stage 14, though for isoform I the CNS expression remains predominant. Expression is also seen in specific types of cells in the embryo; isoform K is expressed in the ventral furrow at stage 5 and in a dynamic pattern in the ventral neurogenic region starting at stage 7. Isoform T is expressed around the tracheal pits at stage 11. Isoform F shows transient enrichment in a dorsal cell layer in the CNS at stages 13 and 14.

The protein resides in the nucleus. In terms of biological role, putative transcription factor required for axon growth and guidance in the central and peripheral nervous systems. Repels CNS axons away from the midline by promoting the expression of the midline repellent sli and its receptor robo. The chain is Longitudinals lacking protein, isoforms F/I/K/T from Drosophila melanogaster (Fruit fly).